The following is a 278-amino-acid chain: Formamidopyrimidine-DNA glycosylase (278 aa).

The active-site Schiff-base intermediate with DNA is P2. The Proton donor role is filled by E3. K59 acts as the Proton donor; for beta-elimination activity in catalysis. DNA contacts are provided by H93, R112, and R153. An FPG-type zinc finger spans residues 238–272; it reads NVYDRAGEPCPRCQSTIERIVVAQRSTYFCPTCQI. The active-site Proton donor; for delta-elimination activity is the R262.

The protein belongs to the FPG family. In terms of assembly, monomer. Zn(2+) is required as a cofactor.

The enzyme catalyses Hydrolysis of DNA containing ring-opened 7-methylguanine residues, releasing 2,6-diamino-4-hydroxy-5-(N-methyl)formamidopyrimidine.. It carries out the reaction 2'-deoxyribonucleotide-(2'-deoxyribose 5'-phosphate)-2'-deoxyribonucleotide-DNA = a 3'-end 2'-deoxyribonucleotide-(2,3-dehydro-2,3-deoxyribose 5'-phosphate)-DNA + a 5'-end 5'-phospho-2'-deoxyribonucleoside-DNA + H(+). Functionally, involved in base excision repair of DNA damaged by oxidation or by mutagenic agents. Acts as a DNA glycosylase that recognizes and removes damaged bases. Has a preference for oxidized purines, such as 7,8-dihydro-8-oxoguanine (8-oxoG). Has AP (apurinic/apyrimidinic) lyase activity and introduces nicks in the DNA strand. Cleaves the DNA backbone by beta-delta elimination to generate a single-strand break at the site of the removed base with both 3'- and 5'-phosphates. The chain is Formamidopyrimidine-DNA glycosylase from Chloroflexus aurantiacus (strain ATCC 29366 / DSM 635 / J-10-fl).